The following is a 1047-amino-acid chain: Isoleucine--tRNA ligase (1047 aa).

A 'HIGH' region motif is present at residues 52 to 62 (PTANGMPGAHH). A 'KMSKS' region motif is present at residues 600–604 (KMSKH). Lysine 603 is a binding site for ATP.

Belongs to the class-I aminoacyl-tRNA synthetase family. IleS type 2 subfamily. Monomer. It depends on Zn(2+) as a cofactor.

It localises to the cytoplasm. The enzyme catalyses tRNA(Ile) + L-isoleucine + ATP = L-isoleucyl-tRNA(Ile) + AMP + diphosphate. Its function is as follows. Catalyzes the attachment of isoleucine to tRNA(Ile). As IleRS can inadvertently accommodate and process structurally similar amino acids such as valine, to avoid such errors it has two additional distinct tRNA(Ile)-dependent editing activities. One activity is designated as 'pretransfer' editing and involves the hydrolysis of activated Val-AMP. The other activity is designated 'posttransfer' editing and involves deacylation of mischarged Val-tRNA(Ile). This Streptomyces coelicolor (strain ATCC BAA-471 / A3(2) / M145) protein is Isoleucine--tRNA ligase.